The following is a 251-amino-acid chain: MRRLVIAGNWKMYKNNKEAVETLTQLKDLTRDVKNVDIVIGAPFTCLSDAVKIVEGSNVKIAAENVYPKIEGAYTGEVSPKMLKDIGVTYVILGHSERREYFKESDEFINQKVKAVLEIGMKPILCIGEKLEDREGGKTLEVLAKQIKEGLVDLSKEDAEKTIVAYEPVWAIGTGKTATPEMAQETHKEIRNVLAEMFGKDVADKMIIQYGGSMKPENAKDLLSQEDIDGGLVGGASLKADSFFEIIKAGN.

Position 9 to 11 (9 to 11) interacts with substrate; that stretch reads NWK. Histidine 95 serves as the catalytic Electrophile. The active-site Proton acceptor is the glutamate 167. Substrate contacts are provided by residues glycine 173, serine 213, and 234–235; that span reads GG.

It belongs to the triosephosphate isomerase family. As to quaternary structure, homodimer.

The protein resides in the cytoplasm. The enzyme catalyses D-glyceraldehyde 3-phosphate = dihydroxyacetone phosphate. It functions in the pathway carbohydrate biosynthesis; gluconeogenesis. Its pathway is carbohydrate degradation; glycolysis; D-glyceraldehyde 3-phosphate from glycerone phosphate: step 1/1. Functionally, involved in the gluconeogenesis. Catalyzes stereospecifically the conversion of dihydroxyacetone phosphate (DHAP) to D-glyceraldehyde-3-phosphate (G3P). The protein is Triosephosphate isomerase of Fusobacterium nucleatum subsp. nucleatum (strain ATCC 25586 / DSM 15643 / BCRC 10681 / CIP 101130 / JCM 8532 / KCTC 2640 / LMG 13131 / VPI 4355).